The sequence spans 156 residues: Small ribosomal subunit protein uS7cz/uS7cy (156 aa).

This sequence belongs to the universal ribosomal protein uS7 family. As to quaternary structure, part of the 30S ribosomal subunit.

Its subcellular location is the plastid. The protein localises to the chloroplast. Functionally, one of the primary rRNA binding proteins, it binds directly to 16S rRNA where it nucleates assembly of the head domain of the 30S subunit. The polypeptide is Small ribosomal subunit protein uS7cz/uS7cy (rps7-A) (Triticum aestivum (Wheat)).